Reading from the N-terminus, the 68-residue chain is Conotoxin Cal12.1p3 (68 aa).

Residues 1-21 (DLITNSYTRGKPRHVTSWPKL) constitute a propeptide that is removed on maturation.

Contains 4 disulfide bonds. In terms of tissue distribution, expressed by the venom duct.

The protein localises to the secreted. This chain is Conotoxin Cal12.1p3, found in Californiconus californicus (California cone).